Consider the following 788-residue polypeptide: Cadherin-10 (788 aa).

The signal sequence occupies residues 1–22; that stretch reads MTIYQFLRLFVLWACLPHFCCP. A propeptide spanning residues 23 to 54 is cleaved from the precursor; it reads ELTFRRTPGIQQMTAESRAPRSDGKILHRQKR. The Extracellular segment spans residues 23-613; that stretch reads ELTFRRTPGI…LLPAGLSTGA (591 aa). Cadherin domains follow at residues 56–160, 161–269, 270–384, 385–489, and 489–603; these read WMWN…EPTF, PEEI…PPRF, PQNT…PPVF, SRSS…APQF, and FAVF…AEAL. Residue Asn256 is glycosylated (N-linked (GlcNAc...) asparagine). N-linked (GlcNAc...) asparagine glycosylation is found at Asn456 and Asn534. Residues 614–634 form a helical membrane-spanning segment; sequence LIAILLCIIILLVIVVLFAAL. The Cytoplasmic portion of the chain corresponds to 635–788; it reads KRQRKKEPLI…YGGGESDKDA (154 aa). Position 784 is a phosphoserine (Ser784).

The protein localises to the cell membrane. Its function is as follows. Cadherins are calcium-dependent cell adhesion proteins. They preferentially interact with themselves in a homophilic manner in connecting cells; cadherins may thus contribute to the sorting of heterogeneous cell types. In Mus musculus (Mouse), this protein is Cadherin-10 (Cdh10).